A 328-amino-acid chain; its full sequence is Tetraacyldisaccharide 4'-kinase (328 aa).

ATP is bound at residue 58 to 65 (TMGGAGKT).

The protein belongs to the LpxK family.

It catalyses the reaction a lipid A disaccharide + ATP = a lipid IVA + ADP + H(+). It participates in glycolipid biosynthesis; lipid IV(A) biosynthesis; lipid IV(A) from (3R)-3-hydroxytetradecanoyl-[acyl-carrier-protein] and UDP-N-acetyl-alpha-D-glucosamine: step 6/6. In terms of biological role, transfers the gamma-phosphate of ATP to the 4'-position of a tetraacyldisaccharide 1-phosphate intermediate (termed DS-1-P) to form tetraacyldisaccharide 1,4'-bis-phosphate (lipid IVA). The polypeptide is Tetraacyldisaccharide 4'-kinase (Phenylobacterium zucineum (strain HLK1)).